The following is a 451-amino-acid chain: Phosphoglucosamine mutase (451 aa).

S103 functions as the Phosphoserine intermediate in the catalytic mechanism. The Mg(2+) site is built by S103, D243, D245, and D247. Phosphoserine is present on S103.

It belongs to the phosphohexose mutase family. Requires Mg(2+) as cofactor. Activated by phosphorylation.

It carries out the reaction alpha-D-glucosamine 1-phosphate = D-glucosamine 6-phosphate. Catalyzes the conversion of glucosamine-6-phosphate to glucosamine-1-phosphate. This is Phosphoglucosamine mutase from Levilactobacillus brevis (strain ATCC 367 / BCRC 12310 / CIP 105137 / JCM 1170 / LMG 11437 / NCIMB 947 / NCTC 947) (Lactobacillus brevis).